Here is a 336-residue protein sequence, read N- to C-terminus: Aspartate--ammonia ligase (336 aa).

Belongs to the class-II aminoacyl-tRNA synthetase family. AsnA subfamily.

Its subcellular location is the cytoplasm. It catalyses the reaction L-aspartate + NH4(+) + ATP = L-asparagine + AMP + diphosphate + H(+). The protein operates within amino-acid biosynthesis; L-asparagine biosynthesis; L-asparagine from L-aspartate (ammonia route): step 1/1. The polypeptide is Aspartate--ammonia ligase (Limosilactobacillus fermentum (strain NBRC 3956 / LMG 18251) (Lactobacillus fermentum)).